Here is a 567-residue protein sequence, read N- to C-terminus: 2-succinyl-5-enolpyruvyl-6-hydroxy-3-cyclohexene-1-carboxylate synthase (567 aa).

The protein belongs to the TPP enzyme family. MenD subfamily. As to quaternary structure, homodimer. The cofactor is Mg(2+). Mn(2+) is required as a cofactor. Thiamine diphosphate serves as cofactor.

The catalysed reaction is isochorismate + 2-oxoglutarate + H(+) = 5-enolpyruvoyl-6-hydroxy-2-succinyl-cyclohex-3-ene-1-carboxylate + CO2. The protein operates within quinol/quinone metabolism; 1,4-dihydroxy-2-naphthoate biosynthesis; 1,4-dihydroxy-2-naphthoate from chorismate: step 2/7. Its pathway is quinol/quinone metabolism; menaquinone biosynthesis. Its function is as follows. Catalyzes the thiamine diphosphate-dependent decarboxylation of 2-oxoglutarate and the subsequent addition of the resulting succinic semialdehyde-thiamine pyrophosphate anion to isochorismate to yield 2-succinyl-5-enolpyruvyl-6-hydroxy-3-cyclohexene-1-carboxylate (SEPHCHC). The sequence is that of 2-succinyl-5-enolpyruvyl-6-hydroxy-3-cyclohexene-1-carboxylate synthase from Shewanella loihica (strain ATCC BAA-1088 / PV-4).